We begin with the raw amino-acid sequence, 37 residues long: Large ribosomal subunit protein bL36 (37 aa).

Belongs to the bacterial ribosomal protein bL36 family.

This Synechococcus elongatus (strain ATCC 33912 / PCC 7942 / FACHB-805) (Anacystis nidulans R2) protein is Large ribosomal subunit protein bL36.